Consider the following 4293-residue polypeptide: Polycystin-1 (4293 aa).

An N-terminal signal peptide occupies residues 1-23; the sequence is MPLGAPALLALALGLGLWLGALA. The LRRNT domain occupies 24-67; it reads GDPGRGCGPCPLPCFCGPAPDAACRVNCSGRWLQTLGPSLRIPA. Over 24 to 3066 the chain is Extracellular; it reads GDPGRGCGPC…IFPEPSASIN (3043 aa). 2 N-linked (GlcNAc...) asparagine glycosylation sites follow: Asn-50 and Asn-89. LRR repeat units follow at residues 68–91 and 92–113; these read DATA…VNLS and ALVE…VFAN. Residues Asn-116 and Asn-121 are each glycosylated (N-linked (GlcNAc...) asparagine). Residues 125 to 178 enclose the LRRCT domain; the sequence is NPFECNCGLAWLPRWAKEHQVHVVQSEATTCRGPIPLAGQPLLSIPLLDNACGE. Residues 177–271 enclose the WSC domain; sequence GEEYVACLPD…PTLLQHTFPA (95 aa). 2 N-linked (GlcNAc...) asparagine glycosylation sites follow: Asn-187 and Asn-239. One can recognise a PKD 1 domain in the interval 272-359; it reads SPGATLVGPH…VQVEATPTVL (88 aa). Residue Asn-370 is glycosylated (N-linked (GlcNAc...) asparagine). Residues 415 to 530 enclose the C-type lectin domain; that stretch reads GNGHCYRLVA…CSAPHSYVCE (116 aa). Disulfide bonds link Cys-436/Cys-529 and Cys-507/Cys-521. Residues 613-632 are disordered; sequence GGAAAVPEGSSEPDNRTEPA. A glycan (N-linked (GlcNAc...) asparagine) is linked at Asn-627. The 34-residue stretch at 633–666 folds into the LDL-receptor class A; atypical domain; that stretch reads PKCVPEELWCPGANVCIPFDASCNSHVCINGSVS. Disulfide bonds link Cys-635–Cys-648 and Cys-642–Cys-660. Residues Asn-662, Asn-740, Asn-804, Asn-835, Asn-848, Asn-859, Asn-884, Asn-915, Asn-998, Asn-1004, Asn-1028, Asn-1084, Asn-1096, Asn-1107, Asn-1172, Asn-1188, Asn-1234, Asn-1263, Asn-1330, Asn-1342, Asn-1376, Asn-1444, Asn-1449, Asn-1468, Asn-1535, Asn-1548, Asn-1557, Asn-1643, Asn-1657, Asn-1706, Asn-1730, Asn-1788, Asn-1831, Asn-1863, and Asn-1876 are each glycosylated (N-linked (GlcNAc...) asparagine). PKD domains are found at residues 849–922, 929–1014, 1017–1123, 1121–1209, 1207–1292, 1288–1377, 1376–1463, 1462–1545, 1544–1629, 1630–1718, 1716–1802, 1804–1886, 1885–1970, 1972–2053, and 2056–2144; these read ATAT…RVTA, LRAV…NKMH, WVSA…LPNV, PNVA…LHGL, HGLT…EVLH, LEVL…IRNI, NITL…VLVT, VTGI…VRGL, GLTI…IEGL, QVAG…VESL, ESLI…VGGL, IRTS…IVNL, NLML…VVGL, VPNC…MVEV, and IIQY…ACRE. Asn-1987, Asn-2046, Asn-2070, Asn-2121, Asn-2244, Asn-2349, Asn-2391, Asn-2408, Asn-2414, Asn-2563, Asn-2640, Asn-2713, Asn-2749, Asn-2813, Asn-2836, Asn-2873, Asn-2948, and Asn-2986 each carry an N-linked (GlcNAc...) asparagine glycan. Residues 2142 to 2828 form the REJ domain; that stretch reads CREPEVEVAL…QLIFLVDSNP (687 aa). The region spanning 2857–3055 is the GAIN-B domain; it reads PIEQLAAERA…SLFVPPSHVQ (199 aa). An intrachain disulfide couples Cys-3007 to Cys-3035. The segment at 3007–3055 is GPS; it reads CQYFSEEMMMWRTEGIVPLEETSPSQAVCLTRHLTAFGASLFVPPSHVQ. A helical transmembrane segment spans residues 3067–3087; it reads YIVLLTCVICLVTYVVMAMIL. The Cytoplasmic segment spans residues 3088–3269; sequence RKLDQLDVSR…DRPPRSRFTR (182 aa). A PLAT domain is found at 3110–3225; that stretch reads FKYEILVKTG…EANGGLVEKE (116 aa). Residues 3270-3290 form a helical membrane-spanning segment; sequence VQRVTCCVLLLCLFLAANAVW. The Extracellular segment spans residues 3291–3315; the sequence is YGVVRDTTYSMGPVSSLISPGVDTV. Residues 3316-3336 form a helical membrane-spanning segment; that stretch reads AIGLVSSVVVYPVYLAVLFLF. Over 3337 to 3549 the chain is Cytoplasmic; it reads RMSRSKVSGD…LPAWCAPLAH (213 aa). A helical transmembrane segment spans residues 3550–3570; it reads GLSLLLVAVAVAVSGWIGASF. At 3571 to 3572 the chain is on the extracellular side; that stretch reads PP. The helical transmembrane segment at 3573-3593 threads the bilayer; that stretch reads SVSVMWLLSSSSSFLASFLGW. Over 3594–3655 the chain is Cytoplasmic; it reads EPLKVLLEAL…LAKEEARKVK (62 aa). A helical transmembrane segment spans residues 3656–3676; the sequence is RLHDMLKRLLVYMLFLLVTLL. Over 3677–3891 the chain is Extracellular; the sequence is ANYGDASCHG…RLSTGLSLPL (215 aa). N-linked (GlcNAc...) asparagine glycans are attached at residues Asn-3728 and Asn-3780. Residues 3892 to 3912 form a helical membrane-spanning segment; that stretch reads LTSVCLLLFALYFSMAEVQTW. Topologically, residues 3913 to 3925 are cytoplasmic; it reads RKDGCACTARPDT. The chain crosses the membrane as a helical span at residues 3926–3946; it reads WARCLLVILTAATGLVRLAQL. Topologically, residues 3947-3974 are extracellular; it reads GIADRQWTHFVQDHPRHFTSFDQVAQLG. Residues 3975–3995 traverse the membrane as a helical segment; that stretch reads SVARGLAASLLFLLLVKAAQQ. The Cytoplasmic segment spans residues 3996–4017; sequence LRFVRQWSVFGKTLCRALPELM. The helical transmembrane segment at 4018 to 4038 threads the bilayer; the sequence is GATLGLVLLGVAYAQMAILLI. The Extracellular segment spans residues 4039 to 4080; the sequence is SSGADTLYNMARAFLVLCPGARVPTLCPSESWYLSPLLCVGL. A helical transmembrane segment spans residues 4081 to 4100; sequence WALRVWGALRLGAILLRWRY. Residues 4101–4293 lie on the Cytoplasmic side of the membrane; that stretch reads HALRGELYRP…PNNKVHPSST (193 aa). Disordered stretches follow at residues 4150–4197 and 4235–4293; these read PLPS…STLK and SLQG…PSST. Positions 4153–4172 are enriched in low complexity; the sequence is SRSSRGSKSSPVVLPPSSGS. At Ser-4156 the chain carries Phosphoserine; by PRKX; in vitro. A compositionally biased stretch (polar residues) spans 4173-4195; sequence EASHPSTSSSQPDGPSASLSRST. The stretch at 4210 to 4241 forms a coiled coil; that stretch reads ESLLVQFDRLNQATEDVYQLEQQLQSLQGHGH. Positions 4238–4256 are enriched in low complexity; that stretch reads GHGHNGPPSSPSPGCFPGS. A compositionally biased stretch (polar residues) spans 4265–4276; sequence SRASQGLDQTVG.

The protein belongs to the polycystin family. Component of the heterotetrameric polycystin channel complex with PKD2; the tetramer contains one PKD1 chain and three PKD2 chains. Interacts with PKD2; the interaction is required for ciliary localization. Interacts with PKD2L1. Interacts with PRKX; involved in differentiation and controlled morphogenesis of the kidney. Interacts (via extracellular domain) with WNT3A, WNT4 and WNT9B. Interacts with WNT5A, DVL1 and DVL2. Interacts with NPHP1 (via SH3 domain). Interacts with BBS1, BBS4, BBS5 and TTC8. Interacts with RGS7. Interacts (via C-terminal domain) with RABEP1; the interaction connects PKD1:PKD2 to GGA1 and ARL3 that mediate the ciliary targeting. Interacts (via the PKD repeats in the N-terminal extracellular region) with EPCIP; the interaction is not dependent on N-glycosylation of either protein. N-glycosylated. In terms of processing, after synthesis, undergoes autoproteolytic cleavage between Leu-3040 and Thr-3041 in the GPS region of the GAIN-B domain. Cleavage at the GPS region occurs through a cis-autoproteolytic mechanism involving an ester-intermediate via N-O acyl rearrangement. This process takes place in the early secretory pathway, depends on initial N-glycosylation, and requires the REJ domain. PKD1 is ubiquitously and incompletely cleaved in wild-type mice, so that uncleaved and cleaved PKD1 molecules coexist. The differential patterns of cleavage during embryonic development, as well as in adult mice, suggest different functions of uncleaved and cleaved molecules.

The protein resides in the cell membrane. It localises to the cell projection. Its subcellular location is the cilium. The protein localises to the endoplasmic reticulum. It is found in the golgi apparatus. The protein resides in the vesicle. It localises to the secreted. Its subcellular location is the extracellular exosome. In terms of biological role, component of a heteromeric calcium-permeable ion channel formed by PKD1 and PKD2 that is activated by interaction between PKD1 and a Wnt family member, such as WNT3A and WNT9B. Both PKD1 and PKD2 are required for channel activity. Involved in renal tubulogenesis. Involved in fluid-flow mechanosensation by the primary cilium in renal epithelium. Acts as a regulator of cilium length, together with PKD2. The dynamic control of cilium length is essential in the regulation of mechanotransductive signaling. The cilium length response creates a negative feedback loop whereby fluid shear-mediated deflection of the primary cilium, which decreases intracellular cAMP, leads to cilium shortening and thus decreases flow-induced signaling. May be an ion-channel regulator. Involved in adhesive protein-protein and protein-carbohydrate interactions. Likely to be involved with polycystin-1-interacting protein 1 in the detection, sequestration and exocytosis of senescent mitochondria. The sequence is that of Polycystin-1 from Mus musculus (Mouse).